The sequence spans 197 residues: Imidazoleglycerol-phosphate dehydratase (197 aa).

It belongs to the imidazoleglycerol-phosphate dehydratase family.

The protein resides in the cytoplasm. The catalysed reaction is D-erythro-1-(imidazol-4-yl)glycerol 3-phosphate = 3-(imidazol-4-yl)-2-oxopropyl phosphate + H2O. The protein operates within amino-acid biosynthesis; L-histidine biosynthesis; L-histidine from 5-phospho-alpha-D-ribose 1-diphosphate: step 6/9. This chain is Imidazoleglycerol-phosphate dehydratase, found in Leptospira biflexa serovar Patoc (strain Patoc 1 / Ames).